The chain runs to 177 residues: Ribosome maturation factor RimM (177 aa).

The PRC barrel domain maps to 104 to 176 (DGEYYFFEIL…KIIVNMPEWL (73 aa)).

Belongs to the RimM family. In terms of assembly, binds ribosomal protein uS19.

The protein localises to the cytoplasm. An accessory protein needed during the final step in the assembly of 30S ribosomal subunit, possibly for assembly of the head region. Essential for efficient processing of 16S rRNA. May be needed both before and after RbfA during the maturation of 16S rRNA. It has affinity for free ribosomal 30S subunits but not for 70S ribosomes. This Fervidobacterium nodosum (strain ATCC 35602 / DSM 5306 / Rt17-B1) protein is Ribosome maturation factor RimM.